A 735-amino-acid polypeptide reads, in one-letter code: Funoran endo-beta-hydrolase (735 aa).

Positions methionine 1–serine 27 are cleaved as a signal peptide. Glutamate 200 (proton donor) is an active-site residue. Residue glutamate 322 is the Nucleophile of the active site.

The protein belongs to the glycosyl hydrolase 86 family.

The catalysed reaction is Endohydrolysis of beta-(1-&gt;4)-linkages between beta-D-galactopyranose-6-sulfate and 3,6-anhydro-alpha-L-galactopyranose units in funoran.. The enzyme catalyses Hydrolysis of (1-&gt;4)-beta-D-galactosidic linkages in agarose, giving the tetramer as the predominant product.. Agarase activity is enhanced in the presence of NaCl. Agarase activity is significantly inhibited by Zn(2+) and slightly activated by several divalent ions including Mg(2+), Cd(2+) and Ca(2+). Endohydrolase that cleaves the beta-1,4 glycosidic bond between beta-D-galactopyranose-6-sulfate (G6S) and 3,6-anhydro-alpha-L-galactopyranose (LA) unit of funoran, a polysaccharide produced by red algae of the genus Gloiopeltis. It releases the disaccharide LA-G6S as the predominant end product. Also acts as a random endo-acting beta-agarase, which can hydrolyze agarose tetrasaccharides and hexasaccharides, and produces disaccharides as smallest products. Besides typical agarose oligosaccharides, it can use methylated galactoses. The enzyme exhibits higher catalytic efficiency towards agarose, but binds funoran preferentially. Has no activity on porphyran. The protein is Funoran endo-beta-hydrolase of Wenyingzhuangia aestuarii.